Reading from the N-terminus, the 200-residue chain is ATP-dependent Clp protease proteolytic subunit (200 aa).

Ser99 functions as the Nucleophile in the catalytic mechanism. His124 is an active-site residue.

It belongs to the peptidase S14 family. Fourteen ClpP subunits assemble into 2 heptameric rings which stack back to back to give a disk-like structure with a central cavity, resembling the structure of eukaryotic proteasomes.

The protein localises to the cytoplasm. It carries out the reaction Hydrolysis of proteins to small peptides in the presence of ATP and magnesium. alpha-casein is the usual test substrate. In the absence of ATP, only oligopeptides shorter than five residues are hydrolyzed (such as succinyl-Leu-Tyr-|-NHMec, and Leu-Tyr-Leu-|-Tyr-Trp, in which cleavage of the -Tyr-|-Leu- and -Tyr-|-Trp bonds also occurs).. In terms of biological role, cleaves peptides in various proteins in a process that requires ATP hydrolysis. Has a chymotrypsin-like activity. Plays a major role in the degradation of misfolded proteins. This is ATP-dependent Clp protease proteolytic subunit from Syntrophomonas wolfei subsp. wolfei (strain DSM 2245B / Goettingen).